Here is a 277-residue protein sequence, read N- to C-terminus: Undecaprenyl-diphosphatase (277 aa).

6 consecutive transmembrane segments (helical) span residues 88 to 108 (MGWLVILGSLPIIVLGLLFQD), 117 to 137 (MWIVATMLIVFGMILAVADAV), 157 to 179 (FAQAMALIPGVSRSGGTITAGLL), 191 to 211 (SFLLAIPAVFGSGLYQLYKTV), 227 to 247 (LATVIAFVVGYVIIGWFLKFV), and 255 to 275 (FVWYRILLGLALYVLLGFNVI).

This sequence belongs to the UppP family.

The protein resides in the cell membrane. The catalysed reaction is di-trans,octa-cis-undecaprenyl diphosphate + H2O = di-trans,octa-cis-undecaprenyl phosphate + phosphate + H(+). Functionally, catalyzes the dephosphorylation of undecaprenyl diphosphate (UPP). Confers resistance to bacitracin. In Paenarthrobacter aurescens (strain TC1), this protein is Undecaprenyl-diphosphatase.